A 477-amino-acid polypeptide reads, in one-letter code: MFKNVFANLQKVGKSLMLPVSVLPIAGILLGIGSAHFNFLPDILSQIMAQTGGSVFSNMPLIFAIGVALGFTNNDGVAALAAVVSYGILIQTLTAVEPIVLHTTIEVIKNKHLSDTGILGGIIAGAISAYMFNKFYRIQLPEYLGFFAGKRFVPIISGLSAILIGVILSLIWPPIGHGIQIFSKWAAYQNPILAFALYGLVERALVPFGLHHIWNVPFQMQIGEYTNSIGQVFHGDIARYMAGDSTAGNLSGGFIFKMYGLPGAALAIWHTSKKENKTKIGSIMISAALTAFLTGITEPIEFSFIIVAPVLYVIHAILAGLSFPLCIFLDMRAGTSFSHGFIDFIVLSGNSHHILLFPIIGILYGLLYYILFYLFIINFNLDTPGRENIKNNILEKDNNEIAPYIITALGGKNNIKNLDACITRLRITVSDISKVKQKDLKNIGAAGIIISGSGIQVVFGTRSENIKTAMDECIKNI.

The 388-residue stretch at 1–388 (MFKNVFANLQ…FNLDTPGREN (388 aa)) folds into the PTS EIIC type-1 domain. The next 10 membrane-spanning stretches (helical) occupy residues 15–35 (SLML…IGSA), 51–71 (TGGS…ALGF), 76–96 (GVAA…LTAV), 112–132 (HLSD…AYMF), 152–172 (FVPI…SLIW), 191–211 (PILA…FGLH), 250–270 (LSGG…AIWH), 280–300 (IGSI…TEPI), 304–324 (FIIV…LSFP), and 357–377 (FPII…LFII). Residues 399–477 (NEIAPYIITA…TAMDECIKNI (79 aa)) form the PTS EIIB type-1 domain. Cys-421 (phosphocysteine intermediate; for EIIB activity) is an active-site residue. Residue Cys-421 is modified to Phosphocysteine.

The protein resides in the cell inner membrane. It carries out the reaction N(pros)-phospho-L-histidyl-[protein] + D-glucose(out) = D-glucose 6-phosphate(in) + L-histidyl-[protein]. Its function is as follows. The phosphoenolpyruvate-dependent sugar phosphotransferase system (sugar PTS), a major carbohydrate active transport system, catalyzes the phosphorylation of incoming sugar substrates concomitantly with their translocation across the cell membrane. The enzyme II complex composed of PtsG and Crr is involved in glucose transport. The chain is PTS system glucose-specific EIICB component (ptsG) from Buchnera aphidicola subsp. Acyrthosiphon pisum (strain APS) (Acyrthosiphon pisum symbiotic bacterium).